The following is a 595-amino-acid chain: MDEVQMETARIQSPKSYLYTTLATTHLGEIASCIISILISNGRLTAREISNRTKIPTKNIKSALVSLIQLNCIYYWQEEKDRKFYYSLKETGLLLFVYSGDIINHIKRQYGEDEAEIIQNILIHGHVKIEDYLTQFNHDKSMKIDQENKFLKLFNDNWLIKLQDYHFHSLDDIWHKIFEECLKDTPRSSVTSEIKRVAEAQAKAKVKLNTLLESGTTGGGDIFTEVNGMKKLKPDLVVTFNLSRFQKHLRTNAFVNMVRSKIGVLTAIVYDAALRYIENKSPPMDYPLLDIPGLINDPKDVKEYILSIENKLVNEKKITFSARDIQRLLPKDIDFKNSVITPTFAKPKRPLENGSSPTLKKIKLEDGIASSTSTSTSTSSSTSSNGTSIDLNTLEQHLKLLLNGTNTAFVNEISPGNYTIPFSHLTNILKQNNFEALVKATLGDYAFRILRCVKSMKLCDEKSICNGALLKEKTVRSELYHLIKANIIEIQEVPRSADRAASKTFYLFRHKSNSNFNYLKNCLIYDMAEILNRIQDFKLEHKILLEKYKLVEGQEDQYLLDRELKLLNDLQLREIKNLVKFQRIKSLYSLYSLVD.

The leucine-zipper stretch occupies residues 523-544 (LIYDMAEILNRIQDFKLEHKIL).

The protein belongs to the RNA polymerase beta chain family. In terms of assembly, component of the RNA polymerase III (Pol III) complex consisting of 17 subunits.

The protein localises to the nucleus. Functionally, DNA-dependent RNA polymerase catalyzes the transcription of DNA into RNA using the four ribonucleoside triphosphates as substrates. Specific core component of RNA polymerase III which synthesizes small RNAs, such as 5S rRNA and tRNAs. The polypeptide is DNA-directed RNA polymerase III subunit RPC3 (RPC82) (Candida albicans (strain SC5314 / ATCC MYA-2876) (Yeast)).